A 203-amino-acid chain; its full sequence is NAD(P)H dehydrogenase (quinone) (203 aa).

One can recognise a Flavodoxin-like domain in the interval 3-194 (VLIPFYSMYG…AGARYQGKYI (192 aa)). FMN contacts are provided by residues 9–14 (SMYGHI) and 82–84 (TRF). Residue Y11 participates in NAD(+) binding. W102 is a substrate binding site. FMN is bound by residues 117-123 (SSATQHG) and H138.

It belongs to the WrbA family. It depends on FMN as a cofactor.

It catalyses the reaction a quinone + NADH + H(+) = a quinol + NAD(+). The catalysed reaction is a quinone + NADPH + H(+) = a quinol + NADP(+). In Geobacter metallireducens (strain ATCC 53774 / DSM 7210 / GS-15), this protein is NAD(P)H dehydrogenase (quinone).